Reading from the N-terminus, the 399-residue chain is Leu/Ile/Val-binding protein homolog 7 (399 aa).

The signal sequence occupies residues 1–22 (MEKHLIALSVAALLAGAAPASA).

Belongs to the leucine-binding protein family.

Its function is as follows. Component of an amino-acid transport system. This chain is Leu/Ile/Val-binding protein homolog 7, found in Brucella suis biovar 1 (strain 1330).